The chain runs to 199 residues: Ribonuclease HII (199 aa).

Residues 7–196 (PWVCGVDEAG…VRELMANEKD (190 aa)) enclose the RNase H type-2 domain. Positions 13, 14, and 105 each coordinate a divalent metal cation.

This sequence belongs to the RNase HII family. The cofactor is Mn(2+). Requires Mg(2+) as cofactor.

It is found in the cytoplasm. The catalysed reaction is Endonucleolytic cleavage to 5'-phosphomonoester.. Its function is as follows. Endonuclease that specifically degrades the RNA of RNA-DNA hybrids. The polypeptide is Ribonuclease HII (Nitrosospira multiformis (strain ATCC 25196 / NCIMB 11849 / C 71)).